A 177-amino-acid chain; its full sequence is Mitochondrial inner membrane protease subunit 2 (177 aa).

Residues Ser-41 and Lys-91 contribute to the active site. A helical membrane pass occupies residues 134–152 (TFGPISSGLVIGKAITIVW).

This sequence belongs to the peptidase S26 family. IMP2 subfamily. As to quaternary structure, component of the mitochondrial inner membrane peptidase (IMP) complex which at least consists of IMP1, IMP2 and SOM1. Post-translationally, the N-terminus is blocked.

The protein localises to the mitochondrion inner membrane. Functionally, catalytic component of the mitochondrial inner membrane peptidase (IMP) complex. IMP catalyzes the removal of signal peptides required for the targeting of proteins from the mitochondrial matrix, across the inner membrane, into the inter-membrane space. The two catalytic IMP subunits seem to have non-overlapping substrate specificities. IMP2 substrates include nuclear encoded CYB2, mitochondrially encoded COX2 and cytochrome c1. Required for the stability of IMP1. The polypeptide is Mitochondrial inner membrane protease subunit 2 (IMP2) (Saccharomyces cerevisiae (strain ATCC 204508 / S288c) (Baker's yeast)).